Consider the following 531-residue polypeptide: 4-hydroxyphenylacetaldehyde oxime monooxygenase (531 aa).

The chain crosses the membrane as a helical span at residues 18–38 (WQTCLLVLLPVLLVSYYLLTS). Heme b is bound by residues Arg-122, Arg-151, Arg-466, and Cys-468.

It belongs to the cytochrome P450 family. It depends on heme b as a cofactor.

It is found in the endoplasmic reticulum membrane. It catalyses the reaction (E)-4-hydroxyphenylacetaldehyde oxime + reduced [NADPH--hemoprotein reductase] + O2 = (S)-4-hydroxymandelonitrile + oxidized [NADPH--hemoprotein reductase] + 2 H2O + H(+). The enzyme catalyses (E)-4-hydroxyphenylacetaldehyde oxime = (Z)-(4-hydroxyphenyl)acetaldehyde oxime. The catalysed reaction is (Z)-(4-hydroxyphenyl)acetaldehyde oxime = 4-hydroxyphenylacetonitrile + H2O. It carries out the reaction 4-hydroxyphenylacetonitrile + reduced [NADPH--hemoprotein reductase] + O2 = (S)-4-hydroxymandelonitrile + oxidized [NADPH--hemoprotein reductase] + H2O + H(+). Its pathway is secondary metabolite biosynthesis; dhurrin biosynthesis; dhurrin from L-tyrosine: step 2/3. Functionally, cytochrome P450 involved in the biosynthesis of the cyanogenic glucoside dhurrin. Catalyzes the conversion of p-hydroxyphenylacetaldoxime to p-hydroxymandelonitrile via three different and successive activities: isomerization of the (E) isomer to the (Z) isomer of p-hydroxyphenylacetaldoxime, followed by dehydration of the oxime to the corresponding nitrile, and C-hydroxylation of the nitrile to produce p-hydroxymandelonitrile. This chain is 4-hydroxyphenylacetaldehyde oxime monooxygenase, found in Sorghum bicolor (Sorghum).